Here is a 94-residue protein sequence, read N- to C-terminus: Trp operon repressor homolog (94 aa).

The DNA-binding element occupies 58 to 81 (QREIAEKYGVSIAQITRGSNALKG).

It belongs to the TrpR family. Homodimer.

The protein localises to the cytoplasm. In terms of biological role, this protein is an aporepressor. When complexed with L-tryptophan it binds the operator region of the trp operon and prevents the initiation of transcription. This chain is Trp operon repressor homolog, found in Chlamydia trachomatis serovar A (strain ATCC VR-571B / DSM 19440 / HAR-13).